The chain runs to 404 residues: Keratin, type I cuticular Ha3-I (404 aa).

Positions 1–56 (MPYNCCLPAMSCRTSCSSRPCVPPSCHGCTLPGACNIPANVGNCNWFCEGSFNGNE) are head. Residues 56–367 (EKETMQFLND…GLLESEDCKL (312 aa)) form the IF rod domain. Residues 57–91 (KETMQFLNDRLASYMEKVRQLERENAELECRIQER) are coil 1A. The segment at 92–102 (NQQQDPLVCPA) is linker 1. Residues 103–203 (YQAYFRTIEE…HEQEVNTLRC (101 aa)) are coil 1B. Positions 204-219 (QLGDRLNVEVDAAPTV) are linker 12. The segment at 220 to 363 (DLNRVLNETR…NTYRGLLESE (144 aa)) is coil 2. Positions 364–404 (DCKLPCNPCATTNACDKPIGPCVPNPCVTRPRCGPCNTFVR) are tail.

It belongs to the intermediate filament family.

In Mus musculus (Mouse), this protein is Keratin, type I cuticular Ha3-I.